The primary structure comprises 118 residues: Thioredoxin H3 (118 aa).

N-acetylalanine is present on A2. The region spanning 2 to 113 (AAEGEVIACH…IIANLEKHKT (112 aa)) is the Thioredoxin domain. Active-site nucleophile residues include C39 and C42. C39 and C42 form a disulfide bridge.

Belongs to the thioredoxin family. Plant H-type subfamily. In terms of assembly, interacts with FBA5 and FBA8. Interacts with FBA6. Interacts with MDH1.

It is found in the cytoplasm. Functionally, thiol-disulfide oxidoreductase that possesses disulfide reductase and insulin disulfide bonds reducing activities. Heat shock causes oligomerization and formation of high molecular weight (HMW) complexes with concomitant functional switching from a disulfide reductase to chaperone. This is Thioredoxin H3 (TRX3) from Arabidopsis thaliana (Mouse-ear cress).